The chain runs to 603 residues: Glutamyl-tRNA(Gln) amidotransferase subunit E (603 aa).

Belongs to the GatB/GatE family. GatE subfamily. Heterodimer of GatD and GatE.

It catalyses the reaction L-glutamyl-tRNA(Gln) + L-glutamine + ATP + H2O = L-glutaminyl-tRNA(Gln) + L-glutamate + ADP + phosphate + H(+). Functionally, allows the formation of correctly charged Gln-tRNA(Gln) through the transamidation of misacylated Glu-tRNA(Gln) in organisms which lack glutaminyl-tRNA synthetase. The reaction takes place in the presence of glutamine and ATP through an activated gamma-phospho-Glu-tRNA(Gln). The GatDE system is specific for glutamate and does not act on aspartate. The protein is Glutamyl-tRNA(Gln) amidotransferase subunit E of Thermoplasma acidophilum (strain ATCC 25905 / DSM 1728 / JCM 9062 / NBRC 15155 / AMRC-C165).